The sequence spans 258 residues: Tropinone reductase-like 3 (258 aa).

19–43 contacts NAD(+); that stretch reads IVTASTQGIGFAIAYRLGLEGAAVV. Ser150 is a binding site for substrate. Tyr163 functions as the Proton acceptor in the catalytic mechanism.

It belongs to the short-chain dehydrogenases/reductases (SDR) family.

Functionally, has no tropinone reductase activity. The polypeptide is Tropinone reductase-like 3 (Erythroxylum coca (Coca plant)).